The chain runs to 764 residues: Probable cyclic nucleotide-gated ion channel 20, chloroplastic (764 aa).

The transit peptide at 1-25 directs the protein to the chloroplast; it reads MASHNENDDIPMLPISDPSSRTRAR. Residues 1–40 form a disordered region; that stretch reads MASHNENDDIPMLPISDPSSRTRARAFTSRSRSVSLSNPT. The segment covering 19–33 has biased composition (low complexity); the sequence is SSRTRARAFTSRSRS. The Stromal portion of the chain corresponds to 26 to 204; the sequence is AFTSRSRSVS…PHAKEVQTWT (179 aa). A helical membrane pass occupies residues 205–225; that stretch reads KFFALSCLLAIFIDPLFFFLI. Over 226–242 the chain is Lumenal; the sequence is KVQEQNKCIMIDWPMTK. Residues 243–263 form a helical membrane-spanning segment; that stretch reads AFVAVRSVTDVIFTMNILLQF. Topologically, residues 264–295 are stromal; the sequence is RLAYVARESTVVGAGQLVSHPKKIALHYLKGK. A helical transmembrane segment spans residues 296 to 316; that stretch reads FFLDLFIVMPLPQILILWIIP. At 317 to 329 the chain is on the lumenal side; the sequence is AHLGASGANYAKN. Residues 330–350 form a helical membrane-spanning segment; sequence LLRAAVLFQYIPKLYRLLPFL. The Stromal segment spans residues 351-366; that stretch reads AGQTPTGFIFESAWAN. The helical transmembrane segment at 367–387 threads the bilayer; the sequence is FVINLLTFMLAGHVVGSCWYL. Residues 388-488 lie on the Lumenal side of the membrane; that stretch reads FGLQRVNQCL…GNQVPSYFLG (101 aa). The chain crosses the membrane as a helical span at residues 489–509; it reads EVFFTMGIIGLGLLLFALLIG. At 510–764 the chain is on the stromal side; sequence NMQNFLQALG…LCTPQSSYSL (255 aa). Residues 593–710 and E658 contribute to the a nucleoside 3',5'-cyclic phosphate site; that span reads IFSL…EDVT. Residues 713–729 form a calmodulin-binding region; sequence FSRFLRSHRVQGAIRYD. In terms of domain architecture, IQ spans 734 to 763; that stretch reads RLRAARQIQVAWRYRRRRLHRLCTPQSSYS.

This sequence belongs to the cyclic nucleotide-gated cation channel (TC 1.A.1.5) family. In terms of assembly, homotetramer or heterotetramer.

It is found in the plastid. It localises to the chloroplast thylakoid membrane. In terms of biological role, probable cyclic nucleotide-gated ion channel. In Arabidopsis thaliana (Mouse-ear cress), this protein is Probable cyclic nucleotide-gated ion channel 20, chloroplastic (CNGC20).